We begin with the raw amino-acid sequence, 710 residues long: Cyclomaltodextrin glucanotransferase (710 aa).

The signal sequence occupies residues 1-27 (MKKTFKLILVLMLSLTLVFGLTAPIQA). Asp54, Asn56, Asn59, Asn60, Gly78, and Asp80 together coordinate Ca(2+). 128 to 129 (YW) is a substrate binding site. Asn167 lines the Ca(2+) pocket. His168 lines the substrate pocket. Residue Ile218 coordinates Ca(2+). 221 to 224 (NLFD) contributes to the substrate binding site. Position 227 (Asp227) interacts with Ca(2+). Arg255 serves as a coordination point for substrate. The active-site Nucleophile is the Asp257. Substrate is bound at residue 260 to 261 (KH). His261 lines the Ca(2+) pocket. The Proton donor role is filled by Glu285. Substrate contacts are provided by His355, Asp398, and Arg402. Residues 526 to 603 (PLIGHVGPTM…GATSNTYNNI (78 aa)) form the IPT/TIG domain. The CBM20 domain maps to 605–710 (ILTGNQICVR…TGTVIVNWQQ (106 aa)).

This sequence belongs to the glycosyl hydrolase 13 family. Ca(2+) serves as cofactor.

The protein localises to the secreted. The enzyme catalyses Cyclizes part of a (1-&gt;4)-alpha-D-glucan chain by formation of a (1-&gt;4)-alpha-D-glucosidic bond.. In terms of biological role, degrades starch to alpha-, beta-, and gamma-cyclodextrins, as well as linear sugars. This chain is Cyclomaltodextrin glucanotransferase (amyA), found in Thermoanaerobacterium thermosulfurigenes (Clostridium thermosulfurogenes).